The following is a 213-amino-acid chain: Pyridoxine/pyridoxamine 5'-phosphate oxidase (213 aa).

FMN contacts are provided by residues 60-65 (RMVLMK), 75-76 (YS), Lys-82, and Gln-104. Lys-65 lines the substrate pocket. Substrate-binding residues include Tyr-122 and Arg-126. Residues 139-140 (QS) and Trp-184 contribute to the FMN site. 190-192 (RLH) serves as a coordination point for substrate. An FMN-binding site is contributed by Arg-194.

Belongs to the pyridoxamine 5'-phosphate oxidase family. As to quaternary structure, homodimer. It depends on FMN as a cofactor.

The enzyme catalyses pyridoxamine 5'-phosphate + O2 + H2O = pyridoxal 5'-phosphate + H2O2 + NH4(+). It carries out the reaction pyridoxine 5'-phosphate + O2 = pyridoxal 5'-phosphate + H2O2. It functions in the pathway cofactor metabolism; pyridoxal 5'-phosphate salvage; pyridoxal 5'-phosphate from pyridoxamine 5'-phosphate: step 1/1. Its pathway is cofactor metabolism; pyridoxal 5'-phosphate salvage; pyridoxal 5'-phosphate from pyridoxine 5'-phosphate: step 1/1. In terms of biological role, catalyzes the oxidation of either pyridoxine 5'-phosphate (PNP) or pyridoxamine 5'-phosphate (PMP) into pyridoxal 5'-phosphate (PLP). This chain is Pyridoxine/pyridoxamine 5'-phosphate oxidase, found in Rhodopseudomonas palustris (strain BisA53).